We begin with the raw amino-acid sequence, 167 residues long: Peptidyl-prolyl cis-trans isomerase-like 3 (167 aa).

The PPIase cyclophilin-type domain maps to 1-160; the sequence is MSVTLHTSHG…EPVRIENVTI (160 aa).

Belongs to the cyclophilin-type PPIase family. PPIL3 subfamily.

The catalysed reaction is [protein]-peptidylproline (omega=180) = [protein]-peptidylproline (omega=0). Functionally, PPIases accelerate the folding of proteins. It catalyzes the cis-trans isomerization of proline imidic peptide bonds in oligopeptides. This chain is Peptidyl-prolyl cis-trans isomerase-like 3 (CYP10), found in Gibberella zeae (strain ATCC MYA-4620 / CBS 123657 / FGSC 9075 / NRRL 31084 / PH-1) (Wheat head blight fungus).